The chain runs to 38 residues: Large ribosomal subunit protein bL36c (38 aa).

Belongs to the bacterial ribosomal protein bL36 family.

It is found in the plastid. It localises to the apicoplast. The sequence is that of Large ribosomal subunit protein bL36c (rpl36) from Theileria parva (East coast fever infection agent).